Consider the following 968-residue polypeptide: RNA polymerase-associated protein RapA (968 aa).

A Helicase ATP-binding domain is found at 164–334; it reads DVGRRHAPRV…FARLRLLDPN (171 aa). Position 177–184 (177–184) interacts with ATP; that stretch reads DEVGLGKT. The DEAH box signature appears at 280–283; the sequence is DEAH. The region spanning 490–662 is the Helicase C-terminal domain; the sequence is RVEWLMGYLT…YLASPDQTEG (173 aa).

The protein belongs to the SNF2/RAD54 helicase family. RapA subfamily. In terms of assembly, interacts with the RNAP. Has a higher affinity for the core RNAP than for the holoenzyme. Its ATPase activity is stimulated by binding to RNAP.

In terms of biological role, transcription regulator that activates transcription by stimulating RNA polymerase (RNAP) recycling in case of stress conditions such as supercoiled DNA or high salt concentrations. Probably acts by releasing the RNAP, when it is trapped or immobilized on tightly supercoiled DNA. Does not activate transcription on linear DNA. Probably not involved in DNA repair. The chain is RNA polymerase-associated protein RapA from Escherichia coli O1:K1 / APEC.